A 515-amino-acid polypeptide reads, in one-letter code: Maturase K (515 aa).

The protein belongs to the intron maturase 2 family. MatK subfamily.

The protein resides in the plastid. Its subcellular location is the chloroplast. Its function is as follows. Usually encoded in the trnK tRNA gene intron. Probably assists in splicing its own and other chloroplast group II introns. The chain is Maturase K from Larix laricina (Tamarack).